A 308-amino-acid chain; its full sequence is Reaction center protein M chain (308 aa).

A run of 3 helical transmembrane segments spans residues 54 to 80, 111 to 140, and 143 to 168; these read GSLG…YQAG, KEGG…RAQA, and MGKH…RPIL. Positions 183 and 203 each coordinate (7R,8Z)-bacteriochlorophyll b. The chain crosses the membrane as a helical span at residues 198 to 226; the sequence is FYNPFHGLSIAFLYGSALLFAMHGATILA. 2 residues coordinate Fe cation: H220 and E235. A ubiquinone is bound at residue W253. Residues 260 to 286 form a helical membrane-spanning segment; sequence NATMEGIHRWAIWMAVLVTLTGGIGIL. H267 lines the Fe cation pocket.

It belongs to the reaction center PufL/M/PsbA/D family. In terms of assembly, reaction center is composed of four bacteriochlorophylls, two bacteriopheophytins, two ubiquinones, one iron, and three highly hydrophobic polypeptide chains (designated L, M, and H).

It localises to the cellular chromatophore membrane. In terms of biological role, the reaction center is a membrane-bound complex that mediates the initial photochemical event in the electron transfer process of photosynthesis. The sequence is that of Reaction center protein M chain (pufM) from Cereibacter sphaeroides (strain ATCC 17023 / DSM 158 / JCM 6121 / CCUG 31486 / LMG 2827 / NBRC 12203 / NCIMB 8253 / ATH 2.4.1.) (Rhodobacter sphaeroides).